The chain runs to 530 residues: MVACDLLWLAAASCLLTLVFPSTTHQGYGNPRNTSNVDLDCGAPGSSSAGICFDPCQNHTVLNDPSRSTENTVSSEECDSHLRGWYRFVGDGGVKMPETCVNVYRCHTYAPMWLSGSHPILGDGIVNRTACANWNENCCFWSSEVQVKACLGESGEYHVYKLQGTPECSLRYCTDPSTAPKKCEIACRPEEECVFQNNSWTCVCRQDLNVSDTLSLQPLLDCGANEIKVKLDKCLLGGLGFKEDIITYLNDRNCRGTMKDEPNNWVSTTSPVVANDCGNILENNGTQAIYRNTLSLATDFIIRDFLVNVNFQCAYPLDMNVSLQTALQPIVSSLNVDVGGAGEFTVTMALFQDQSYTHPYEGSKVLLPVENILYVGALLNRGDTSRFKLLLTNCYATPSGDRNDIVKYFIIRNRCPNQRDSTINVEENGVSSESRFSVQMFMFAGNYDLVFLHCEVYLCDSTTEQCQPSCSTSRLRSSEPAIDLTRVLDIGPITKKSVQNPDTSNGTPRNTGFLLAWPTFFLPVFLAWLF.

The signal sequence occupies residues 1 to 21; sequence MVACDLLWLAAASCLLTLVFP. N-linked (GlcNAc...) asparagine glycosylation occurs at Asn33. Disulfide bonds link Cys41-Cys52, Cys56-Cys150, Cys78-Cys168, Cys100-Cys138, Cys106-Cys173, Cys131-Cys139, Cys183-Cys193, Cys187-Cys202, Cys204-Cys234, Cys222-Cys313, and Cys254-Cys277. Residues 54 to 74 are D10C; sequence DPCQNHTVLNDPSRSTENTVS. Residues Asn58 and Asn127 are each glycosylated (N-linked (GlcNAc...) asparagine). The region spanning 179-223 is the EGF-like domain; that stretch reads APKKCEIACRPEEECVFQNNSWTCVCRQDLNVSDTLSLQPLLDCG. N-linked (GlcNAc...) asparagine glycosylation is found at Asn197 and Asn209. The tract at residues 221–314 is ZP-N; the sequence is DCGANEIKVK…FLVNVNFQCA (94 aa). Positions 221–477 constitute a ZP domain; that stretch reads DCGANEIKVK…PSCSTSRLRS (257 aa). N-linked (GlcNAc...) asparagine glycans are attached at residues Asn284 and Asn320. The flexible ZP-N/ZP-C linker stretch occupies residues 315-338; it reads YPLDMNVSLQTALQPIVSSLNVDV. The segment at 339 to 350 is internal hydrophobic patch (IHP); the sequence is GGAGEFTVTMAL. The ZP-C stretch occupies residues 339 to 477; sequence GGAGEFTVTM…PSCSTSRLRS (139 aa). Cystine bridges form between Cys394–Cys454, Cys415–Cys470, and Cys459–Cys466. The segment at 484–492 is external hydrophobic patch (EHP); sequence LTRVLDIGP. Asn505 carries GPI-anchor amidated asparagine lipidation. The propeptide at 506-530 is removed in mature form; it reads GTPRNTGFLLAWPTFFLPVFLAWLF.

Interacts with SYCN. Interacts with bacterial adhesin fimH. In terms of processing, N-glycosylated. As to expression, expressed in pancreas.

The protein resides in the zymogen granule membrane. It localises to the secreted. The protein localises to the cell membrane. It is found in the apical cell membrane. Its subcellular location is the membrane raft. The protein resides in the endosome. In terms of biological role, functions as an intestinal M-cell transcytotic receptor specific of type-I-piliated bacteria that participates in the mucosal immune response toward these bacteria. At the apical membrane of M-cells it binds fimH, a protein of the bacteria type I pilus tip. Internalizes bound bacteria, like E.coli and S.typhimurium, from the lumen of the intestine and delivers them, through M-cells, to the underlying organized lymphoid follicles where they are captured by antigen-presenting dendritic cells to elicit a mucosal immune response. This is Pancreatic secretory granule membrane major glycoprotein GP2 from Rattus norvegicus (Rat).